The primary structure comprises 279 residues: Probable endonuclease 4 (279 aa).

Zn(2+)-binding residues include His69, His109, Glu145, Asp179, His182, His216, Asp229, His231, and Glu261.

This sequence belongs to the AP endonuclease 2 family. It depends on Zn(2+) as a cofactor.

It carries out the reaction Endonucleolytic cleavage to 5'-phosphooligonucleotide end-products.. Functionally, endonuclease IV plays a role in DNA repair. It cleaves phosphodiester bonds at apurinic or apyrimidinic (AP) sites, generating a 3'-hydroxyl group and a 5'-terminal sugar phosphate. This is Probable endonuclease 4 from Desulforapulum autotrophicum (strain ATCC 43914 / DSM 3382 / VKM B-1955 / HRM2) (Desulfobacterium autotrophicum).